The chain runs to 317 residues: D-alanine--D-alanine ligase (317 aa).

The region spanning 104–303 is the ATP-grasp domain; that stretch reads KRVWLQHGLP…YAELCVAILA (200 aa). ATP is bound at residue 130–185; it reads PDRLGLPLILKPPHEGSTVGITKVAACADMEQAYAAASHFDEVVLAEQFVRGRELT. The Mg(2+) site is built by aspartate 257, glutamate 270, and asparagine 272.

This sequence belongs to the D-alanine--D-alanine ligase family. Mg(2+) serves as cofactor. Mn(2+) is required as a cofactor.

The protein resides in the cytoplasm. The catalysed reaction is 2 D-alanine + ATP = D-alanyl-D-alanine + ADP + phosphate + H(+). The protein operates within cell wall biogenesis; peptidoglycan biosynthesis. Its function is as follows. Cell wall formation. The protein is D-alanine--D-alanine ligase of Bordetella avium (strain 197N).